The following is a 595-amino-acid chain: Leiomodin-1 (595 aa).

Disordered stretches follow at residues 1 to 69 (MSKV…EAML), 81 to 322 (QREM…KVKN), and 467 to 568 (DKQR…QEKN). Residue Ser12 is modified to Phosphoserine. Positions 27–40 (EEMEELEKELDVVD) are enriched in acidic residues. Composition is skewed to basic and acidic residues over residues 81 to 110 (QREMSVDESKQVGRKTDAKNGEEKDSDASR), 117 to 127 (QDSDLGKEPKK), 134 to 192 (FSRD…EKTG), 200 to 223 (SRDKDKKKEEVKEPSKKEEVKLTA), 230 to 249 (GRREDGRLKESSKENKKPED), 257 to 287 (RDWRKEDEKVKKEENQPDKEVREESKTKAPE), 467 to 476 (DKQRQKRLQE), and 484 to 493 (SGEKKDRLEV). Ser85 carries the phosphoserine modification. The residue at position 135 (Ser135) is a Phosphoserine. Repeat copies occupy residues 165-179 (AAVDRKESGKDGREE), 180-195 (RAAAARKEEEKTGSVK), 196-211 (NAGLSRDKDKKKEEVK), 212-226 (EPSKKEEVKLTAESR), 227-240 (NTVGRREDGRLKES), 242-255 (KENKKPEDEGIGSG), 256-271 (GRDWRKEDEKVKKEEN), and 272-288 (QPDKEVREESKTKAPEK). Residues 165–288 (AAVDRKESGK…EESKTKAPEK (124 aa)) are 8 X approximate tandem repeats. The tract at residues 503–522 (SPKPSPQPSPKPAPKNSPKK) is 5 X 4 AA approximate tandem repeats. Pro residues-rich tracts occupy residues 505–517 (KPSPQPSPKPAPK) and 527–538 (AAPPPPPPPLAP). Phosphoserine is present on Ser550. One can recognise a WH2 domain in the interval 569 to 588 (SRDQLLAAIRSSNLKQLKKV).

It belongs to the tropomodulin family. As to expression, detected in aorta, urinary bladder and uterus (at protein level). Detected in smooth muscle cells. Detected in aorta, bladder, colon, intestine, stomach and uterus.

The protein localises to the cytoplasm. Its subcellular location is the myofibril. It localises to the sarcomere. The protein resides in the cytoskeleton. Required for proper contractility of visceral smooth muscle cells. Mediates nucleation of actin filaments. This is Leiomodin-1 (Lmod1) from Mus musculus (Mouse).